We begin with the raw amino-acid sequence, 370 residues long: tRNA/tmRNA (uracil-C(5))-methyltransferase (370 aa).

Residues Gln-195, Tyr-221, Asn-226, Glu-242, and Asp-302 each coordinate S-adenosyl-L-methionine. Catalysis depends on Cys-327, which acts as the Nucleophile. Catalysis depends on Glu-361, which acts as the Proton acceptor.

The protein belongs to the class I-like SAM-binding methyltransferase superfamily. RNA M5U methyltransferase family. TrmA subfamily.

The catalysed reaction is uridine(54) in tRNA + S-adenosyl-L-methionine = 5-methyluridine(54) in tRNA + S-adenosyl-L-homocysteine + H(+). It catalyses the reaction uridine(341) in tmRNA + S-adenosyl-L-methionine = 5-methyluridine(341) in tmRNA + S-adenosyl-L-homocysteine + H(+). Dual-specificity methyltransferase that catalyzes the formation of 5-methyluridine at position 54 (m5U54) in all tRNAs, and that of position 341 (m5U341) in tmRNA (transfer-mRNA). This Wolinella succinogenes (strain ATCC 29543 / DSM 1740 / CCUG 13145 / JCM 31913 / LMG 7466 / NCTC 11488 / FDC 602W) (Vibrio succinogenes) protein is tRNA/tmRNA (uracil-C(5))-methyltransferase.